The following is a 1029-amino-acid chain: MFFSGDPSTRKRVDLGGRSTKERDARKLLEQTRMERNRRLLQKQQNSAALKIQKFFRGRRSMAIERSKVRHDFCETYGNNCQNVDRHCFEPGSSFLRQFLFFFKAQNSGDFVILVETCRLLQSFVDSSGDIVSLFSGLDYSSEHNLVDFRVKKLAFTCIEAIHQNRNRLRDQLLVTPEEASISTAILMEAVSLLLDPKLPWVCKIVSYLQKRKVFKLVREMVTTAKESPRGKTMTGNILSLERVLILIVPHIGREPCCCTVVDPRWSFSSMILTIPLIWKLFPNLKVVFANPSLSQHYIHQMASCIQKDTCVLPMETSPEFPGYACLLGNTLDTANVVLSQPECSLDMAIDIALVATFFLETLPPVKSSEGESRQGSSDEDDMLIDDVPGLVLNKALEQQITNAIDSRFLLQLTNVLFRQVSLGMQSYDEDKEALAIGTASSFLYAAFNTLPLERIMTILAYRTELVAVLWNYMKRCHENQKWSSMPKLLAYLPGDAPGWLLPLVVFCPVYKHMLMIVDNEEFYEREKPLSLQDIRLLIIILKQALWQLLWVNPLTQPNTGKSVSNDLSKKNPIELIQNRMGIVVSELLSQLQDWNNRKQFTSSSDFQADSVNEYFISQAIMEGTRANYILMQAPFLIPFTSRVKIFTTQLATARQSHGSQGIFARNRFRIRRDHILEDAYNQMSALSEDDLRSSIRVTFVNELGVEEAGIDGGGIFKDFMEKITRAAFDVQYGLFKETADHMLYPNPGSGMIHEQHLQFFHFLGSLLAKAMFEGILVDIPFATFFLSKLKQKYNYLNDLPSLDPELYRHLIFLKRYKGDISDLELYFVILNNEYGERTEEELLPGGQDMRVTNENVITFIHLVSNHRLNFQIRQQSSHFLRGFQQLIPKEWIDMFNEHELQVLISGSVDSLDIDDLRNNTNYAGGYHAGHYVIDMFWEVMKSFSTENQKKFLKFVTGCSRGPLLGFKYLEPAFCIQRAAGSASNESVDRLPTSATCMNLLKLPPYQSKELLETKLMYAISAEAGFDLS.

Residues 1–20 (MFFSGDPSTRKRVDLGGRST) form a disordered region. Residues 8–20 (STRKRVDLGGRST) show a composition bias toward basic and acidic residues. The IQ domain occupies 45–74 (QNSAALKIQKFFRGRRSMAIERSKVRHDFC). One can recognise an HECT domain in the interval 688–1029 (SEDDLRSSIR…ISAEAGFDLS (342 aa)). Catalysis depends on Cys-997, which acts as the Glycyl thioester intermediate.

It belongs to the UPL family.

The enzyme catalyses S-ubiquitinyl-[E2 ubiquitin-conjugating enzyme]-L-cysteine + [acceptor protein]-L-lysine = [E2 ubiquitin-conjugating enzyme]-L-cysteine + N(6)-ubiquitinyl-[acceptor protein]-L-lysine.. It functions in the pathway protein modification; protein ubiquitination. Probable E3 ubiquitin-protein ligase which mediates ubiquitination and subsequent proteasomal degradation of target proteins. This Arabidopsis thaliana (Mouse-ear cress) protein is E3 ubiquitin-protein ligase UPL6 (UPL6).